A 495-amino-acid polypeptide reads, in one-letter code: Guanosine-5'-triphosphate,3'-diphosphate pyrophosphatase (495 aa).

Belongs to the GppA/Ppx family. GppA subfamily.

The enzyme catalyses guanosine 3'-diphosphate 5'-triphosphate + H2O = guanosine 3',5'-bis(diphosphate) + phosphate + H(+). It participates in purine metabolism; ppGpp biosynthesis; ppGpp from GTP: step 2/2. In terms of biological role, catalyzes the conversion of pppGpp to ppGpp. Guanosine pentaphosphate (pppGpp) is a cytoplasmic signaling molecule which together with ppGpp controls the 'stringent response', an adaptive process that allows bacteria to respond to amino acid starvation, resulting in the coordinated regulation of numerous cellular activities. The chain is Guanosine-5'-triphosphate,3'-diphosphate pyrophosphatase from Enterobacter sp. (strain 638).